A 445-amino-acid chain; its full sequence is Putative ubiquitin carboxyl-terminal hydrolase L293 (445 aa).

The region spanning 133-441 (KALANFGNSC…SAYIILYGDI (309 aa)) is the USP domain. The active-site Nucleophile is Cys142. Residue His384 is the Proton acceptor of the active site.

The protein belongs to the peptidase C19 family.

The protein resides in the virion. It carries out the reaction Thiol-dependent hydrolysis of ester, thioester, amide, peptide and isopeptide bonds formed by the C-terminal Gly of ubiquitin (a 76-residue protein attached to proteins as an intracellular targeting signal).. This chain is Putative ubiquitin carboxyl-terminal hydrolase L293, found in Acanthamoeba polyphaga mimivirus (APMV).